Here is a 686-residue protein sequence, read N- to C-terminus: Glycine--tRNA ligase beta subunit (686 aa).

It belongs to the class-II aminoacyl-tRNA synthetase family. As to quaternary structure, tetramer of two alpha and two beta subunits.

The protein localises to the cytoplasm. The enzyme catalyses tRNA(Gly) + glycine + ATP = glycyl-tRNA(Gly) + AMP + diphosphate. This Halothermothrix orenii (strain H 168 / OCM 544 / DSM 9562) protein is Glycine--tRNA ligase beta subunit.